The sequence spans 311 residues: Formimidoylglutamase (311 aa).

Residues His-130, Asp-155, His-157, Asp-159, Cys-242, and Asp-244 each contribute to the Mn(2+) site.

Belongs to the arginase family. Requires Mn(2+) as cofactor.

The catalysed reaction is N-formimidoyl-L-glutamate + H2O = formamide + L-glutamate. It functions in the pathway amino-acid degradation; L-histidine degradation into L-glutamate; L-glutamate from N-formimidoyl-L-glutamate (hydrolase route): step 1/1. In terms of biological role, catalyzes the conversion of N-formimidoyl-L-glutamate to L-glutamate and formamide. The chain is Formimidoylglutamase from Staphylococcus haemolyticus (strain JCSC1435).